Here is a 339-residue protein sequence, read N- to C-terminus: 4-amino-5-hydroxymethyl-2-methylpyrimidine phosphate synthase (339 aa).

Position 62 is an N6-(pyridoxal phosphate)lysine (Lys-62). The active site involves His-66. 115-118 provides a ligand contact to pyridoxal 5'-phosphate; it reads GEFG. Positions 195-199 match the CCCFC; essential for catalytic activity, may be the site of iron coordination motif; it reads CCCFC.

This sequence belongs to the NMT1/THI5 family. Homodimer. Requires Fe(3+) as cofactor.

The catalysed reaction is N(6)-(pyridoxal phosphate)-L-lysyl-[4-amino-5-hydroxymethyl-2-methylpyrimidine phosphate synthase] + L-histidyl-[4-amino-5-hydroxymethyl-2-methylpyrimidine phosphate synthase] + 2 Fe(3+) + 4 H2O = L-lysyl-[4-amino-5-hydroxymethyl-2-methylpyrimidine phosphate synthase] + (2S)-2-amino-5-hydroxy-4-oxopentanoyl-[4-amino-5-hydroxymethyl-2-methylpyrimidine phosphate synthase] + 4-amino-2-methyl-5-(phosphooxymethyl)pyrimidine + 3-oxopropanoate + 2 Fe(2+) + 2 H(+). It participates in cofactor biosynthesis; thiamine diphosphate biosynthesis. Functionally, responsible for the formation of the pyrimidine heterocycle in the thiamine biosynthesis pathway. Catalyzes the formation of hydroxymethylpyrimidine phosphate (HMP-P) from histidine and pyridoxal phosphate (PLP). The protein uses PLP and the active site histidine to form HMP-P, generating an inactive enzyme. The enzyme can only undergo a single turnover, which suggests it is a suicide enzyme. The sequence is that of 4-amino-5-hydroxymethyl-2-methylpyrimidine phosphate synthase from Candida albicans (strain WO-1) (Yeast).